The following is a 325-amino-acid chain: MPRPGRNTYSDQKPPYSYISLTAMAIQSSPEKMLPLSEIYKFIMDRFPYYRENTQRWQNSLRHNLSFNDCFIKIPRRPDQPGKGSFWALHPSCGDMFENGSFLRRRKRFKVLKSDHLAPSKPADAAQYLQQQAKLRLSALAASGTHLPQMPAAAYNLGGVAQPSGFKHPFAIENIIAREYKMPGGLAFSAMQPVPAAYPLPNQLTTMGSSLGTGWPHVYGSAGMIDSATPISMTSGDYSAYGVPLKPLCHAAGQTLPAIPVPIKPTPAAVPALPALPAPIPTLLSNSPPSLSPTSSQTATSQSSPATPSETLTSPASALHSVAVH.

The segment at residues 12-103 (QKPPYSYISL…GDMFENGSFL (92 aa)) is a DNA-binding region (fork-head). Residues 284–309 (LSNSPPSLSPTSSQTATSQSSPATPS) show a composition bias toward low complexity. Residues 284-325 (LSNSPPSLSPTSSQTATSQSSPATPSETLTSPASALHSVAVH) form a disordered region.

In terms of tissue distribution, expressed widespread in the early developing ventricular zone of the neural tube and later restricted to areas of the spinal cord, hindbrain, thalamus and hypothalamus. Expressed in epithelial cells of developing and adult mammary glands.

It localises to the nucleus. Transcription factor expressed by neural progenitor cells in specific regions of the embryonic neuroepithelium. Essential for the mammillary nuclei maintenance. Negatively regulates the proliferation of oligodendrocyte progenitors and promotes oligodendrocyte maturation. Also expressed in mammary glands, plays a role in lactation, controls development of mammary glands and the inferior colliculi of the midbrain in the central nervous system that regulates the milk-ejection reflex. The polypeptide is Forkhead box protein B1 (Foxb1) (Mus musculus (Mouse)).